A 164-amino-acid chain; its full sequence is CASP-like protein 1C2 (164 aa).

Topologically, residues 1 to 8 (MVKLTQRL) are cytoplasmic. A helical transmembrane segment spans residues 9-29 (GGLVLRFAAFCAALGAVIAMI). The Extracellular portion of the chain corresponds to 30–51 (TSRERSSFFVISLVAKYSDLAA). A helical membrane pass occupies residues 52 to 72 (FKYFVIANAIVTVYSFLVLFL). The Cytoplasmic segment spans residues 73 to 80 (PKESLLWK). The helical transmembrane segment at 81 to 101 (FVVVLDLMVTMLLTSSLSAAV) threads the bilayer. Topologically, residues 102–129 (AVAQVGKRGNANAGWLPICGQVPRFCDQ) are extracellular. A helical membrane pass occupies residues 130–150 (ITGALIAGLVALVLYVFLLIF). Residues 151-164 (SIHHVVDPFLLRKS) are Cytoplasmic-facing.

The protein belongs to the Casparian strip membrane proteins (CASP) family. In terms of assembly, homodimer and heterodimers.

Its subcellular location is the cell membrane. The protein is CASP-like protein 1C2 of Arabidopsis thaliana (Mouse-ear cress).